Here is a 445-residue protein sequence, read N- to C-terminus: Trigger factor (445 aa).

In terms of domain architecture, PPIase FKBP-type spans 172 to 257; sequence GDQVVINFVG…VKSVNWAHLP (86 aa).

This sequence belongs to the FKBP-type PPIase family. Tig subfamily.

It localises to the cytoplasm. It catalyses the reaction [protein]-peptidylproline (omega=180) = [protein]-peptidylproline (omega=0). Its function is as follows. Involved in protein export. Acts as a chaperone by maintaining the newly synthesized protein in an open conformation. Functions as a peptidyl-prolyl cis-trans isomerase. In Polynucleobacter necessarius subsp. necessarius (strain STIR1), this protein is Trigger factor.